A 670-amino-acid chain; its full sequence is Methionine--tRNA ligase (670 aa).

The 'HIGH' region motif lies at proline 14–histidine 24. 4 residues coordinate Zn(2+): cysteine 145, cysteine 148, cysteine 158, and cysteine 161. The short motif at lysine 330–serine 334 is the 'KMSKS' region element. Lysine 333 lines the ATP pocket. In terms of domain architecture, tRNA-binding spans aspartate 570–lysine 670.

The protein belongs to the class-I aminoacyl-tRNA synthetase family. MetG type 1 subfamily. Homodimer. Zn(2+) serves as cofactor.

It is found in the cytoplasm. The catalysed reaction is tRNA(Met) + L-methionine + ATP = L-methionyl-tRNA(Met) + AMP + diphosphate. Its function is as follows. Is required not only for elongation of protein synthesis but also for the initiation of all mRNA translation through initiator tRNA(fMet) aminoacylation. This chain is Methionine--tRNA ligase, found in Legionella pneumophila (strain Corby).